The sequence spans 286 residues: Bifunctional protein FolD 2 (286 aa).

NADP(+) contacts are provided by residues 165–167 (GRG), Thr192, and Ile233.

This sequence belongs to the tetrahydrofolate dehydrogenase/cyclohydrolase family. In terms of assembly, homodimer.

The catalysed reaction is (6R)-5,10-methylene-5,6,7,8-tetrahydrofolate + NADP(+) = (6R)-5,10-methenyltetrahydrofolate + NADPH. It catalyses the reaction (6R)-5,10-methenyltetrahydrofolate + H2O = (6R)-10-formyltetrahydrofolate + H(+). It participates in one-carbon metabolism; tetrahydrofolate interconversion. Catalyzes the oxidation of 5,10-methylenetetrahydrofolate to 5,10-methenyltetrahydrofolate and then the hydrolysis of 5,10-methenyltetrahydrofolate to 10-formyltetrahydrofolate. The chain is Bifunctional protein FolD 2 from Salinispora arenicola (strain CNS-205).